The primary structure comprises 44 residues: Photosystem I reaction center subunit IX (44 aa).

A helical transmembrane segment spans residues 7 to 27; sequence YLSVAPVLATLWFGSLAGLLI.

It belongs to the PsaJ family.

Its subcellular location is the plastid. It is found in the chloroplast thylakoid membrane. Its function is as follows. May help in the organization of the PsaE and PsaF subunits. This Illicium oligandrum (Star anise) protein is Photosystem I reaction center subunit IX.